We begin with the raw amino-acid sequence, 331 residues long: XylDLEGF operon transcriptional activator 3 (331 aa).

The region spanning 214-315 is the HTH araC/xylS-type domain; the sequence is ERVVQFIEDN…GELPSDTLRR (102 aa). DNA-binding regions (H-T-H motif) lie at residues 231–252 and 282–305; these read ERLA…EKHA and VTEM…RSTF.

The protein resides in the cytoplasm. Its function is as follows. Regulatory protein of the TOL plasmid xyl operons. XylS activates the xylXYZLTEGFJQKIH operon required for the degradation of toluene, m-xylene and p-xylene. The polypeptide is XylDLEGF operon transcriptional activator 3 (xylS3) (Pseudomonas putida (Arthrobacter siderocapsulatus)).